A 918-amino-acid chain; its full sequence is Leucine--tRNA ligase (918 aa).

Positions 40-51 match the 'HIGH' region motif; that stretch reads PYPSGVGLHVGH. The short motif at 692–696 is the 'KMSKS' region element; the sequence is KMSKS. Residue Lys695 coordinates ATP.

It belongs to the class-I aminoacyl-tRNA synthetase family.

It is found in the cytoplasm. It carries out the reaction tRNA(Leu) + L-leucine + ATP = L-leucyl-tRNA(Leu) + AMP + diphosphate. The chain is Leucine--tRNA ligase from Azobacteroides pseudotrichonymphae genomovar. CFP2.